We begin with the raw amino-acid sequence, 230 residues long: 2-C-methyl-D-erythritol 4-phosphate cytidylyltransferase (230 aa).

The protein belongs to the IspD/TarI cytidylyltransferase family. IspD subfamily.

The catalysed reaction is 2-C-methyl-D-erythritol 4-phosphate + CTP + H(+) = 4-CDP-2-C-methyl-D-erythritol + diphosphate. The protein operates within isoprenoid biosynthesis; isopentenyl diphosphate biosynthesis via DXP pathway; isopentenyl diphosphate from 1-deoxy-D-xylulose 5-phosphate: step 2/6. Catalyzes the formation of 4-diphosphocytidyl-2-C-methyl-D-erythritol from CTP and 2-C-methyl-D-erythritol 4-phosphate (MEP). The chain is 2-C-methyl-D-erythritol 4-phosphate cytidylyltransferase from Laribacter hongkongensis (strain HLHK9).